A 991-amino-acid chain; its full sequence is Translation initiation factor IF-2 (991 aa).

2 disordered regions span residues 126 to 220 and 325 to 359; these read QADH…DVGE and VKAA…VDEK. Polar residues-rich tracts occupy residues 138 to 160 and 201 to 210; these read QTES…TEPA and PAAQTESAVQ. Residues 326–340 are compositionally biased toward low complexity; it reads KAAGDGDTAPAADDA. Over residues 343-353 the composition is skewed to basic residues; it reads GKKKPGKKKKK. The tr-type G domain occupies 488 to 658; sequence IRPPVVTIMG…LTEAEIRELK (171 aa). A G1 region spans residues 497–504; the sequence is GHVDHGKT. 497–504 is a binding site for GTP; that stretch reads GHVDHGKT. The G2 stretch occupies residues 522 to 526; that stretch reads GITQH. Residues 544 to 547 are G3; sequence DTPG. GTP is bound by residues 544-548 and 598-601; these read DTPGH and NKID. The interval 598-601 is G4; sequence NKID. A G5 region spans residues 634 to 636; the sequence is SAK.

The protein belongs to the TRAFAC class translation factor GTPase superfamily. Classic translation factor GTPase family. IF-2 subfamily.

It is found in the cytoplasm. In terms of biological role, one of the essential components for the initiation of protein synthesis. Protects formylmethionyl-tRNA from spontaneous hydrolysis and promotes its binding to the 30S ribosomal subunits. Also involved in the hydrolysis of GTP during the formation of the 70S ribosomal complex. This is Translation initiation factor IF-2 from Chlorobium phaeobacteroides (strain DSM 266 / SMG 266 / 2430).